A 376-amino-acid polypeptide reads, in one-letter code: Phytanoyl-CoA hydroxylase interacting protein-like (376 aa).

Phosphoserine occurs at positions 12 and 15. Residue Asn23 is glycosylated (N-linked (GlcNAc...) asparagine). Ser25 carries the phosphoserine modification. Residue Asn37 is glycosylated (N-linked (GlcNAc...) asparagine). A Fibronectin type-III domain is found at 52–161; sequence VPRNIKISNI…EIIEFCTADY (110 aa).

This sequence belongs to the PHYHIP family.

Functionally, may play a role in the development of the central system. The sequence is that of Phytanoyl-CoA hydroxylase interacting protein-like (PHYHIPL) from Bos taurus (Bovine).